Consider the following 580-residue polypeptide: Threonine--tRNA ligase (580 aa).

A catalytic region spans residues 179-476 (DHRKIGKDLN…LLEQTKGILP (298 aa)). The Zn(2+) site is built by Cys-272, His-323, and His-453.

This sequence belongs to the class-II aminoacyl-tRNA synthetase family. Homodimer. Requires Zn(2+) as cofactor.

It is found in the cytoplasm. It catalyses the reaction tRNA(Thr) + L-threonine + ATP = L-threonyl-tRNA(Thr) + AMP + diphosphate + H(+). Functionally, catalyzes the attachment of threonine to tRNA(Thr) in a two-step reaction: L-threonine is first activated by ATP to form Thr-AMP and then transferred to the acceptor end of tRNA(Thr). Also edits incorrectly charged L-seryl-tRNA(Thr). The protein is Threonine--tRNA ligase of Ureaplasma parvum serovar 3 (strain ATCC 27815 / 27 / NCTC 11736).